We begin with the raw amino-acid sequence, 371 residues long: Sporulation-specific protein 2 (371 aa).

It is found in the spore wall. Essential for sporulation and seems to have a role at the time of, or after, initiation of nuclear division. Appears to have a role in outer spore wall formation. This is Sporulation-specific protein 2 (SSP2) from Saccharomyces cerevisiae (strain ATCC 204508 / S288c) (Baker's yeast).